Here is a 476-residue protein sequence, read N- to C-terminus: Angiotensinogen (476 aa).

An N-terminal signal peptide occupies residues 1–24; sequence MAPAGLSLGAAILCLLAWAGLAAG. A disulfide bridge connects residues Cys-42 and Cys-161. 4 N-linked (GlcNAc...) asparagine glycosylation sites follow: Asn-295, Asn-319, Asn-362, and Asn-401.

This sequence belongs to the serpin family. Post-translationally, in response to low blood pressure, the enzyme renin/REN cleaves angiotensinogen to produce angiotensin-1. Angiotensin-1 is a substrate of ACE (angiotensin converting enzyme) that removes a dipeptide to yield the physiologically active peptide angiotensin-2. Angiotensin-1 and angiotensin-2 can be further processed to generate angiotensin-3, angiotensin-4. Angiotensin 1-9 is cleaved from angiotensin-1 by ACE2 and can be further processed by ACE to produce angiotensin 1-7, angiotensin 1-5 and angiotensin 1-4. Angiotensin 1-7 has also been proposed to be cleaved from angiotensin-2 by ACE2 or from angiotensin-1 by MME (neprilysin). In terms of processing, the disulfide bond is labile. Angiotensinogen is present in the circulation in a near 40:60 ratio with the oxidized disulfide-bonded form, which preferentially interacts with receptor-bound renin.

The protein resides in the secreted. Its function is as follows. Essential component of the renin-angiotensin system (RAS), a potent regulator of blood pressure, body fluid and electrolyte homeostasis. Acts directly on vascular smooth muscle as a potent vasoconstrictor, affects cardiac contractility and heart rate through its action on the sympathetic nervous system, and alters renal sodium and water absorption through its ability to stimulate the zona glomerulosa cells of the adrenal cortex to synthesize and secrete aldosterone. Acts by binding to angiotensin receptors AGTR1 and AGTR2. Also binds the DEAR/FBXW7-AS1 receptor. In terms of biological role, stimulates aldosterone release. Functionally, is a ligand for the G-protein coupled receptor MAS1. Has vasodilator and antidiuretic effects. Has an antithrombotic effect that involves MAS1-mediated release of nitric oxide from platelets. The protein is Angiotensinogen (AGT) of Bos taurus (Bovine).